The chain runs to 934 residues: LPS-assembly protein LptD (934 aa).

A signal peptide spans 1–33 (MALKSPAFRRKFPLLVTGGLLALQPFATSYVVA). A disordered region spans residues 52–86 (KSPVNNLPPRPVHDGAALTSGTEAPSAEAESADKP).

Belongs to the LptD family. As to quaternary structure, component of the lipopolysaccharide transport and assembly complex. Interacts with LptE and LptA.

It is found in the cell outer membrane. Its function is as follows. Together with LptE, is involved in the assembly of lipopolysaccharide (LPS) at the surface of the outer membrane. The protein is LPS-assembly protein LptD of Pseudomonas putida (strain W619).